Here is a 184-residue protein sequence, read N- to C-terminus: Secreted protein B (184 aa).

Positions 1-19 (MRFILVLVLILGLVSSSFG) are cleaved as a signal peptide. Residue N129 is glycosylated (N-linked (GlcNAc...) asparagine). A Cell attachment site motif is present at residues 164–166 (RGD).

The protein belongs to the Sct family.

It localises to the secreted. In Dictyostelium discoideum (Social amoeba), this protein is Secreted protein B (29C).